We begin with the raw amino-acid sequence, 332 residues long: Ferredoxin--NADP reductase (332 aa).

Residues T20, E39, Q47, Y52, V92, F126, D288, and S329 each contribute to the FAD site.

Belongs to the ferredoxin--NADP reductase type 2 family. As to quaternary structure, homodimer. FAD serves as cofactor.

It catalyses the reaction 2 reduced [2Fe-2S]-[ferredoxin] + NADP(+) + H(+) = 2 oxidized [2Fe-2S]-[ferredoxin] + NADPH. The sequence is that of Ferredoxin--NADP reductase from Geobacillus thermodenitrificans (strain NG80-2).